Consider the following 259-residue polypeptide: L-cystine import ATP-binding protein TcyN (259 aa).

Residues 2–239 enclose the ABC transporter domain; sequence IEIKNIHKQF…TKKDRTRQFL (238 aa). 34–41 contributes to the ATP binding site; it reads GPSGSGKT.

This sequence belongs to the ABC transporter superfamily. L-cystine importer (TC 3.A.1.3.13) family. The complex is composed of two ATP-binding proteins (TcyN), two transmembrane proteins (TcyL and TcyM) and two solute-binding proteins (TcyJ and TcyK).

The protein resides in the cell membrane. Its function is as follows. Part of the ABC transporter complex TcyJKLMN involved in L-cystine import. Responsible for energy coupling to the transport system. Is also involved in cystathionine, djenkolate, and S-methylcysteine transport. This chain is L-cystine import ATP-binding protein TcyN (tcyN), found in Bacillus subtilis (strain 168).